The following is a 454-amino-acid chain: tRNA modification GTPase MnmE (454 aa).

(6S)-5-formyl-5,6,7,8-tetrahydrofolate contacts are provided by Arg23, Glu80, and Lys120. The 162-residue stretch at 216-377 (GMRVVIAGRP…VREHLKACIG (162 aa)) folds into the TrmE-type G domain. Asn226 provides a ligand contact to K(+). GTP-binding positions include 226–231 (NAGKSS), 245–251 (TEIAGTT), 270–273 (DTAG), and 335–338 (NKAD). Ser230 lines the Mg(2+) pocket. K(+) contacts are provided by Thr245, Ile247, and Thr250. Thr251 is a Mg(2+) binding site. Lys454 provides a ligand contact to (6S)-5-formyl-5,6,7,8-tetrahydrofolate.

The protein belongs to the TRAFAC class TrmE-Era-EngA-EngB-Septin-like GTPase superfamily. TrmE GTPase family. Homodimer. Heterotetramer of two MnmE and two MnmG subunits. Requires K(+) as cofactor.

The protein localises to the cytoplasm. In terms of biological role, exhibits a very high intrinsic GTPase hydrolysis rate. Involved in the addition of a carboxymethylaminomethyl (cmnm) group at the wobble position (U34) of certain tRNAs, forming tRNA-cmnm(5)s(2)U34. This chain is tRNA modification GTPase MnmE, found in Pseudoalteromonas translucida (strain TAC 125).